Reading from the N-terminus, the 133-residue chain is MKLLRFLVLSPSGIKLDKTIISAQVKTTEGYIGLNFNRAPLIAAIQSHLCKIIFADQTKREAIIGAGLMLIKKTEAKIFTENFVFADEVDINETLKRKTELERKIHHIKDAKLNVKIEQNLMFELLKLSSKKK.

This sequence belongs to the ATPase epsilon chain family. As to quaternary structure, F-type ATPases have 2 components, CF(1) - the catalytic core - and CF(0) - the membrane proton channel. CF(1) has five subunits: alpha(3), beta(3), gamma(1), delta(1), epsilon(1). CF(0) has three main subunits: a, b and c.

The protein resides in the cell membrane. Its function is as follows. Produces ATP from ADP in the presence of a proton gradient across the membrane. The protein is ATP synthase epsilon chain (atpC) of Mycoplasma genitalium (strain ATCC 33530 / DSM 19775 / NCTC 10195 / G37) (Mycoplasmoides genitalium).